Consider the following 367-residue polypeptide: Endopolygalacturonase B (367 aa).

Residues 1–17 (MHFQLLGLAALGSLAAA) form the signal peptide. The propeptide occupies 18 to 30 (APAPSRTSELVER). Cysteines 34 and 49 form a disulfide. 5 PbH1 repeats span residues 161-191 (GNDVHLTDITIDNSDGDNNGGHNTDAFDVSE), 192-213 (SNGVYITGANVKNQDDCLAINS), 214-234 (GENIEFTGATCSGGHGISIGS), 243-264 (VKNVKVADSTVVDSDNGIRIKT), and 272-294 (VSGVTYENITLKNIKKNGIVIEQ). The Proton donor role is filled by Asp206. A disulfide bridge links Cys208 with Cys224. The active site involves His228. A glycan (N-linked (GlcNAc...) asparagine) is linked at Asn279. 2 cysteine pairs are disulfide-bonded: Cys334–Cys339 and Cys358–Cys367.

It belongs to the glycosyl hydrolase 28 family.

Its subcellular location is the secreted. The catalysed reaction is (1,4-alpha-D-galacturonosyl)n+m + H2O = (1,4-alpha-D-galacturonosyl)n + (1,4-alpha-D-galacturonosyl)m.. Involved in maceration and soft-rotting of plant tissue. Hydrolyzes the 1,4-alpha glycosidic bonds of de-esterified pectate in the smooth region of the plant cell wall. The chain is Endopolygalacturonase B (pgaB) from Aspergillus flavus (strain ATCC MYA-384 / AF70).